The sequence spans 357 residues: Major outer membrane protein P.IB (357 aa).

The N-terminal stretch at 1–19 (MKKSLIALTLAALPVAAMA) is a signal peptide.

The protein belongs to the Gram-negative porin family. In terms of assembly, homotrimer.

The protein resides in the cell outer membrane. Functionally, serves as a slightly cation selective porin. The polypeptide is Major outer membrane protein P.IB (por) (Neisseria sicca).